Consider the following 2077-residue polypeptide: MKIITSSTNQNDSKYGPRAGKQCMSNSFSFLHTVYLNGINNSLNAGTIDAIMEEGYHLDTASTLALMLDNSDSQDYRLLTEIPRRIHSRYGVTQHELSRPFNGTLDTQKIDNEVYFGLIDFILYGKTKNCPAFAVITIGVLSRAIFFLNNTLYLFDSHPTEREATAAIYICQDIEEAYELLTAHGTEGFYYDASFIFFIETSNLSLSSHDAELLILKTYKDPDIAITLDKFSSTEIHDIKKTDDIGSQQDLVAAKTTYLERAPQKRKKNSHSLELELNDKKKKDTASLTYYATEVDLIPSFYELRSQFQSLFHDLKSFPIMKSQFNWTIYLQDSPMNPNQPFATPFLWNRVFHLLCQIVDVFVGVGSTNDDSSKQKQQTIFINYLLPFKDFSEVFNEALTACQENNLDILLIYNNYLCKTTTFRTLERILLSKFLAIADNEHEKHYEWVKSWTTQMLQEMPKKLDDIENYLKAYVSQNPVKHFHEFVCLNKAEKHNIAVLLNEKRKEIQEDIERDKNIFAQLSNFIDKLGETPALPIESENVHKVHTSDITEAIVPRFMTESIELPNISTLNNTQQLSLEKQISEKLTNTIHTLRNKFTKIVQDNYNNLAAGFMPVTELNCLFAYLVNLYFNIEVLKHSGLNINTELLQEVEKLYDNTQFLRFGTSHFNINNLSNFTLSIRKMFVDFYNSQKPSDRASEILAAIESILADPSKNKTIVNIEMIKSQLEELGKMEISTTENKQTAEITKQILGDQELTPIYDFLHHLSAYNLPNTTTVKNLHLHFILEKRPDIAAILHDKIQSILDICIDDMLNDITVPEQTFSTVLFLVDLFPNSTEKTALFESVLTLRQLAKKCANLKTLEEFDDLAQFITTNSEQLQNMMKQHFGKKIPTLMDHIKFLYSQKIITAEEKNWIQRAKTAVITSPEELTAFLATAPTKHALQTCKPELDKALQRHMEEQMKQTAENDKKHILTIRNTLEKRLNDILLILKDGQFSSLETVHLNLLETFLKQLQDNDLIIHFTHALLPVLKDIETTISKTISDILEKILIKTPLNPEQMSKEEQKYTPLLSFLSKFKKTTFCTEDVKTEIDQMQKSITFLTKIATSTNKYTRISHSVYGQELNLYEERITELKKETNKIKEQLSKEYAVAEKKILLSSQDAKTNKIYLVLNTHTLKEIKNTQFRETAFAKALTVEVNNKENQLQELLNHFNAHLKAKMDQNHITKLSFDTKWTAFVSDSRLYFPDFVDIKLQDFISDPFKVISQLMNKAANEMPYIQAEITLKWLTQLVHDINKFCLSAISEFGKEAIPFNYAALRDLEYQINTKYVEIENKVICNETVENTKNIPKLTKLLKELDPKRVAGGQKQYQTLMNKILTSETSMQQTYEKEQLKKEYFETVNNVASFKLAFNFPKQRQNVERLMEKFKSLPKGQPFEKFPEENDLFSDSLITENYINGLRALLNFITAAQNYIQNTLLKQWAVFQQQNFIPIDYSVANVKPISDLYARLRIERDRQVFYQVNSVFGTQLIVDETGVPLQFHNIFYNAVVKFFSLNYKQIHVPEDTPRLVSSQYKLLSVCKSFIIILQQFWENIITLDLGPYLRDGTQNFKRELIPIVNLKLFIYIITQAWTASEDSTVSTAFELPIKQFTLLILCSHPEYLYGCLSHPTDLVINSLAKSIDKDSLYDTFVVSHNPPEKPMHLMRSICIDTQLWQSAKLMKDTFQQTFFTQLCPQNEKFFIYLTAFLILPYKFLNYIWIQYKPITFTQRSYQNLIKDLCSEYVHQNKITMSSVTPHEPDTIKSGEKITSKITVHKAQNTPTLTRLQAQEYVFDYILYSFLTGYEMTFAMYIDTIEKTYLLCMRHLENVLHDKDFQSVLRARTFDINYILKQSWTKNIVEHSIFSVQLNKIVSYLNHTNRATPNIPLILFNYDNEVVNVYLPPMSTDPKKVAFYIKNPFHFPVQEYEATDLISFHLYPKTTDILNQLPPNKTVSTRPYNLSSETLTTKNLSEPKFKQPTVTGLMPKSQSIILSTDTNVLETSPDIKANTASAAIKDVTLAREQISEFSESINTTLSKLKSLYL.

The tract at residues 1-231 (MKIITSSTNQ…PDIAITLDKF (231 aa)) is deubiquitination activity. A Peptidase C76 domain is found at 3–221 (IITSSTNQND…ELLILKTYKD (219 aa)). Residues C23, D156, and H158 contribute to the active site. Position 287 (S287) is a region of interest, interaction with inner tegument protein.

Belongs to the herpesviridae large tegument protein family. In terms of assembly, interacts with host CUL1 and CUL4A; these interactions inhibit the E3 ligase activity of cullins. Interacts with inner tegument protein. Interacts with capsid vertex specific component CVC2. Interacts with the major capsid protein/MCP.

The protein resides in the virion tegument. It localises to the host cytoplasm. Its subcellular location is the host nucleus. It carries out the reaction Thiol-dependent hydrolysis of ester, thioester, amide, peptide and isopeptide bonds formed by the C-terminal Gly of ubiquitin (a 76-residue protein attached to proteins as an intracellular targeting signal).. Functionally, large tegument protein that plays multiple roles in the viral cycle. During viral entry, remains associated with the capsid while most of the tegument is detached and participates in the capsid transport toward the host nucleus. Plays a role in the routing of the capsid at the nuclear pore complex and subsequent uncoating. Within the host nucleus, acts as a deneddylase and promotes the degradation of nuclear CRLs (cullin-RING ubiquitin ligases) and thereby stabilizes nuclear CRL substrates, while cytoplasmic CRLs remain unaffected. These modifications prevent host cell cycle S-phase progression and create a favorable environment allowing efficient viral genome replication. Participates later in the secondary envelopment of capsids. Indeed, plays a linker role for the association of the outer viral tegument to the capsids together with the inner tegument protein. This Homo sapiens (Human) protein is Large tegument protein deneddylase (U31).